The chain runs to 521 residues: Bifunctional purine biosynthesis protein PurH (521 aa).

One can recognise an MGS-like domain in the interval 1–145; it reads MIKQALISVS…KNHKDVIVIC (145 aa).

This sequence belongs to the PurH family.

It carries out the reaction (6R)-10-formyltetrahydrofolate + 5-amino-1-(5-phospho-beta-D-ribosyl)imidazole-4-carboxamide = 5-formamido-1-(5-phospho-D-ribosyl)imidazole-4-carboxamide + (6S)-5,6,7,8-tetrahydrofolate. The catalysed reaction is IMP + H2O = 5-formamido-1-(5-phospho-D-ribosyl)imidazole-4-carboxamide. The protein operates within purine metabolism; IMP biosynthesis via de novo pathway; 5-formamido-1-(5-phospho-D-ribosyl)imidazole-4-carboxamide from 5-amino-1-(5-phospho-D-ribosyl)imidazole-4-carboxamide (10-formyl THF route): step 1/1. It participates in purine metabolism; IMP biosynthesis via de novo pathway; IMP from 5-formamido-1-(5-phospho-D-ribosyl)imidazole-4-carboxamide: step 1/1. This Herminiimonas arsenicoxydans protein is Bifunctional purine biosynthesis protein PurH.